The sequence spans 86 residues: Small ribosomal subunit protein bS18c (86 aa).

Belongs to the bacterial ribosomal protein bS18 family. In terms of assembly, part of the 30S ribosomal subunit.

The protein resides in the plastid. It localises to the chloroplast. This Larix laricina (Tamarack) protein is Small ribosomal subunit protein bS18c.